Consider the following 222-residue polypeptide: Thiamine-phosphate synthase (222 aa).

Residues 42-46 and Asn-74 contribute to the 4-amino-2-methyl-5-(diphosphooxymethyl)pyrimidine site; that span reads QYRDK. Residues Asp-75 and Asp-94 each coordinate Mg(2+). Thr-113 provides a ligand contact to 4-amino-2-methyl-5-(diphosphooxymethyl)pyrimidine. 140–142 contacts 2-[(2R,5Z)-2-carboxy-4-methylthiazol-5(2H)-ylidene]ethyl phosphate; it reads SAT. Lys-143 serves as a coordination point for 4-amino-2-methyl-5-(diphosphooxymethyl)pyrimidine. Gly-169 lines the 2-[(2R,5Z)-2-carboxy-4-methylthiazol-5(2H)-ylidene]ethyl phosphate pocket.

This sequence belongs to the thiamine-phosphate synthase family. Requires Mg(2+) as cofactor.

It catalyses the reaction 2-[(2R,5Z)-2-carboxy-4-methylthiazol-5(2H)-ylidene]ethyl phosphate + 4-amino-2-methyl-5-(diphosphooxymethyl)pyrimidine + 2 H(+) = thiamine phosphate + CO2 + diphosphate. The enzyme catalyses 2-(2-carboxy-4-methylthiazol-5-yl)ethyl phosphate + 4-amino-2-methyl-5-(diphosphooxymethyl)pyrimidine + 2 H(+) = thiamine phosphate + CO2 + diphosphate. The catalysed reaction is 4-methyl-5-(2-phosphooxyethyl)-thiazole + 4-amino-2-methyl-5-(diphosphooxymethyl)pyrimidine + H(+) = thiamine phosphate + diphosphate. It participates in cofactor biosynthesis; thiamine diphosphate biosynthesis; thiamine phosphate from 4-amino-2-methyl-5-diphosphomethylpyrimidine and 4-methyl-5-(2-phosphoethyl)-thiazole: step 1/1. Functionally, condenses 4-methyl-5-(beta-hydroxyethyl)thiazole monophosphate (THZ-P) and 2-methyl-4-amino-5-hydroxymethyl pyrimidine pyrophosphate (HMP-PP) to form thiamine monophosphate (TMP). The protein is Thiamine-phosphate synthase of Marinobacter nauticus (strain ATCC 700491 / DSM 11845 / VT8) (Marinobacter aquaeolei).